The primary structure comprises 152 residues: MKKIKIKILDDRIGTQFSLPSYATSGSSGLDLRACIKDSIILLPNETVLIPTGIAVYIDDPYITAIILPRSGLGHVQGIVLGNLVGLIDSDYQGQVMVSLWNRGSRNFSVKVGMRIAQIVFIPIIRPIFEIVTNFVVDTERKVQGFGHSGVK.

Substrate contacts are provided by residues 70–72 (RSG), asparagine 83, 87–89 (LID), and methionine 97.

This sequence belongs to the dUTPase family. The cofactor is Mg(2+).

It catalyses the reaction dUTP + H2O = dUMP + diphosphate + H(+). The protein operates within pyrimidine metabolism; dUMP biosynthesis; dUMP from dCTP (dUTP route): step 2/2. Functionally, this enzyme is involved in nucleotide metabolism: it produces dUMP, the immediate precursor of thymidine nucleotides and it decreases the intracellular concentration of dUTP so that uracil cannot be incorporated into DNA. This chain is Deoxyuridine 5'-triphosphate nucleotidohydrolase, found in Buchnera aphidicola subsp. Baizongia pistaciae (strain Bp).